Reading from the N-terminus, the 721-residue chain is Methionine--tRNA ligase (721 aa).

The 'HIGH' region signature appears at 27 to 37 (PYANGQIHIGH). Cysteine 158, cysteine 161, cysteine 171, and cysteine 174 together coordinate Zn(2+). Positions 348-352 (KMSKS) match the 'KMSKS' region motif. Lysine 351 is an ATP binding site. A tRNA-binding domain is found at 615–721 (DFAKIDLRIA…SGAKPGMRVK (107 aa)).

Belongs to the class-I aminoacyl-tRNA synthetase family. MetG type 1 subfamily. As to quaternary structure, homodimer. Zn(2+) is required as a cofactor.

The protein localises to the cytoplasm. The catalysed reaction is tRNA(Met) + L-methionine + ATP = L-methionyl-tRNA(Met) + AMP + diphosphate. In terms of biological role, is required not only for elongation of protein synthesis but also for the initiation of all mRNA translation through initiator tRNA(fMet) aminoacylation. The polypeptide is Methionine--tRNA ligase (Burkholderia vietnamiensis (strain G4 / LMG 22486) (Burkholderia cepacia (strain R1808))).